A 1270-amino-acid polypeptide reads, in one-letter code: DNA-directed RNA polymerase subunit beta (1270 aa).

Belongs to the RNA polymerase beta chain family. In terms of assembly, the RNAP catalytic core consists of 2 alpha, 1 beta, 1 beta' and 1 omega subunit. When a sigma factor is associated with the core the holoenzyme is formed, which can initiate transcription.

The enzyme catalyses RNA(n) + a ribonucleoside 5'-triphosphate = RNA(n+1) + diphosphate. Its function is as follows. DNA-dependent RNA polymerase catalyzes the transcription of DNA into RNA using the four ribonucleoside triphosphates as substrates. This Christiangramia forsetii (strain DSM 17595 / CGMCC 1.15422 / KT0803) (Gramella forsetii) protein is DNA-directed RNA polymerase subunit beta.